The following is a 319-amino-acid chain: Forkhead box protein B1 (319 aa).

A DNA-binding region (fork-head) is located at residues 13-107 (KPPYSYISLT…ENGSFLRRRK (95 aa)). The disordered stretch occupies residues 278 to 310 (LSNSSPSMSPTSPQTATSQSSPATPSDTLTNPS). Residues 279–305 (SNSSPSMSPTSPQTATSQSSPATPSDT) show a composition bias toward low complexity.

In terms of tissue distribution, in early gastrulae, expressed in the inner layer of the posterior dorsal ectoderm and in non-involuted mesoderm. By the mid-gastrula stage, expressed solely in the posterior ectoderm. At the end of gastrulation, expressed in ectodermal regions fated to become diencephalon, midbrain and hindbrain, and weakly expressed in regions fated to become spinal cord and tailbud. At the neurula stage, expressed in the midbrain and posterior forebrain (diencephalon) but not in the more anterior forebrain (telencephalon). Also expressed posteriorly in rhombomere 5. At tailbud stages, expression remains in the anterior brain and is also detectable along the length of the central nervous system and in the tailbud.

It is found in the nucleus. Its function is as follows. Probable transcription factor. May be involved in the early anteroposterior patterning of the neuroectoderm. This chain is Forkhead box protein B1, found in Xenopus laevis (African clawed frog).